We begin with the raw amino-acid sequence, 573 residues long: O-fucosyltransferase 20 (573 aa).

At 1 to 60 (MALSKNSNSNSFNKKKVSYISVPSQIINSLSSSSLQSLLVSPKKSSRSTNRFSFSYRNPR) the chain is on the cytoplasmic side. A helical; Signal-anchor for type II membrane protein membrane pass occupies residues 61–81 (IWFFTLFLVSLFGMLKLGFNV). Residues 82-573 (DPISLPFSRY…RQQQEQQSDA (492 aa)) lie on the Lumenal side of the membrane. Asn138 is a glycosylation site (N-linked (GlcNAc...) asparagine). 344 to 346 (HLR) lines the substrate pocket. 2 N-linked (GlcNAc...) asparagine glycosylation sites follow: Asn385 and Asn517. The segment covering 547 to 556 (AGKDVTKHPV) has biased composition (basic and acidic residues). The segment at 547–573 (AGKDVTKHPVPECMCSDRQQQEQQSDA) is disordered. The segment covering 563–573 (DRQQQEQQSDA) has biased composition (polar residues).

The protein belongs to the glycosyltransferase GT106 family. In terms of assembly, interacts with RACK1A. As to expression, highly expressed in shoot apical meristem (SAM) and in young vegetative tissues.

Its subcellular location is the golgi apparatus membrane. Its pathway is glycan metabolism. In terms of biological role, may play a role in the biosynthesis of matrix polysaccharides and contribute to the biomechanics and development of the plant cell wall. The chain is O-fucosyltransferase 20 from Arabidopsis thaliana (Mouse-ear cress).